The chain runs to 78 residues: Large ribosomal subunit protein bL28 (78 aa).

The tract at residues 1–23 (MSRKCQITGKKANNAMAVSHSHR) is disordered.

Belongs to the bacterial ribosomal protein bL28 family.

In Picosynechococcus sp. (strain ATCC 27264 / PCC 7002 / PR-6) (Agmenellum quadruplicatum), this protein is Large ribosomal subunit protein bL28.